We begin with the raw amino-acid sequence, 395 residues long: Cystathionine beta-lyase (395 aa).

An N6-(pyridoxal phosphate)lysine modification is found at Lys-210.

The protein belongs to the trans-sulfuration enzymes family. Homotetramer. Requires pyridoxal 5'-phosphate as cofactor.

The protein resides in the cytoplasm. The enzyme catalyses L,L-cystathionine + H2O = L-homocysteine + pyruvate + NH4(+). It catalyses the reaction an S-substituted L-cysteine + H2O = a thiol + pyruvate + NH4(+). The protein operates within amino-acid biosynthesis; L-methionine biosynthesis via de novo pathway; L-homocysteine from L-cystathionine: step 1/1. In terms of biological role, catalyzes the cleavage of cystathionine to homocysteine, pyruvate and ammonia during methionine biosynthesis. The sequence is that of Cystathionine beta-lyase (metC) from Salmonella typhimurium (strain LT2 / SGSC1412 / ATCC 700720).